Consider the following 391-residue polypeptide: Histamine H4 receptor (391 aa).

Over 1 to 19 (MSESNGTDVLPLTAQVPLA) the chain is Extracellular. An N-linked (GlcNAc...) asparagine glycan is attached at asparagine 5. The helical transmembrane segment at 20–40 (FLMSLLAFAITIGNAVVILAF) threads the bilayer. Topologically, residues 41 to 52 (VADRNLRHRSNY) are cytoplasmic. The helical transmembrane segment at 53–73 (FFLNLAISDFFVGVISIPLYI) threads the bilayer. The Extracellular segment spans residues 74 to 87 (PHTLFNWNFGSGIC). A disulfide bridge connects residues cysteine 87 and cysteine 166. The chain crosses the membrane as a helical span at residues 88 to 108 (MFWLITDYLLCTASVYSIVLI). The Cytoplasmic portion of the chain corresponds to 109–131 (SYDRYQSVSNAVRYRAQHTGILK). The helical transmembrane segment at 132–152 (IVAQMVAVWILAFLVNGPMIL) threads the bilayer. Residues 153-174 (ASDSWKNSTNTEECEPGFVTEW) lie on the Extracellular side of the membrane. Asparagine 159 carries an N-linked (GlcNAc...) asparagine glycan. A helical transmembrane segment spans residues 175-195 (YILAITAFLEFLLPVSLVVYF). The Cytoplasmic portion of the chain corresponds to 196–306 (SVQIYWSLWK…LLRGRKLARS (111 aa)). The chain crosses the membrane as a helical span at residues 307–327 (LAVLLSAFAICWAPYCLFTIV). Residues 328–343 (LSTYRRGERPKSIWYS) are Extracellular-facing. The helical transmembrane segment at 344–364 (IAFWLQWFNSLINPFLYPLCH) threads the bilayer. Residues 365–391 (RRFQKAFWKILCVTKQPAPSQTQSVSS) are Cytoplasmic-facing.

This sequence belongs to the G-protein coupled receptor 1 family. Interacts with TSPAN4.

It localises to the cell membrane. Functionally, the H4 subclass of histamine receptors could mediate the histamine signals in peripheral tissues. Displays a significant level of constitutive activity (spontaneous activity in the absence of agonist). The polypeptide is Histamine H4 receptor (Hrh4) (Rattus norvegicus (Rat)).